Consider the following 217-residue polypeptide: Tectonin-1 (217 aa).

A run of 6 repeats spans residues 2 to 37 (VHWEKHEGELSVVGVGAGSNDIWGVNHLGHIYHWDG), 38 to 74 (HKWHKVDGELTNISVGHDGEVWGVNKNHNIYRLDRSN), 75 to 111 (NKWTQIPGELVQVSVGSHHHVWGVNHLDHIYKWDHHH), 112 to 146 (NKWDKIDGALTNVSVGKDGTVYGVNRGHQIYRWDG), 147 to 182 (SKVDLVLGELVQIHVSDAEKIVGVNHLDHIYRLKHG), and 183 to 217 (KDWEKLDGELTWVSVGHHGEVWGVNKLHHIYKATL). A 6 X approximate tandem repeats region spans residues 2-217 (VHWEKHEGEL…KLHHIYKATL (216 aa)).

It belongs to the tectonin family.

The protein resides in the cell surface. The protein localises to the cytoplasmic vesicle membrane. Its function is as follows. Probably involved in bacterial recognition. May be a lectin that function as part of a transmembrane signaling complex during phagocytosis. The protein is Tectonin-1 (TECA) of Physarum polycephalum (Slime mold).